We begin with the raw amino-acid sequence, 149 residues long: Glycine cleavage system H protein (149 aa).

The 82-residue stretch at 23–104 folds into the Lipoyl-binding domain; it reads LIWVGISNHA…PYGIWLFKIN (82 aa). Residue K64 is modified to N6-lipoyllysine.

Belongs to the GcvH family. In terms of assembly, the glycine cleavage system is composed of four proteins: P, T, L and H. (R)-lipoate is required as a cofactor.

In terms of biological role, the glycine cleavage system catalyzes the degradation of glycine. The H protein shuttles the methylamine group of glycine from the P protein to the T protein. This chain is Glycine cleavage system H protein, found in Polynucleobacter necessarius subsp. necessarius (strain STIR1).